Consider the following 756-residue polypeptide: Probable chemoreceptor y4sI (756 aa).

Transmembrane regions (helical) follow at residues 26–46 (VCVAVLSCTTVATFAGITSVA) and 330–350 (LIKIIGITAATAILALAMAIL). HAMP domains follow at residues 353–406 (RSIS…ARVA) and 434–486 (DEQA…ETIR). One can recognise a Methyl-accepting transducer domain in the interval 491-720 (QAASMSSIVS…ESDAACRSLN (230 aa)). The segment at 736–756 (GGGSSTRQPQSPPTQRYFMSR) is disordered.

This sequence belongs to the methyl-accepting chemotaxis (MCP) protein family.

It localises to the cell membrane. Chemotactic-signal transducers respond to changes in the concentration of attractants and repellents in the environment, transduce a signal from the outside to the inside of the cell, and facilitate sensory adaptation through the variation of the level of methylation. Attractants increase the level of methylation while repellents decrease the level of methylation. The polypeptide is Probable chemoreceptor y4sI (Sinorhizobium fredii (strain NBRC 101917 / NGR234)).